We begin with the raw amino-acid sequence, 228 residues long: Cytidylate kinase (228 aa).

Residue 7–15 (GPVATGKST) participates in ATP binding.

Belongs to the cytidylate kinase family. Type 1 subfamily.

Its subcellular location is the cytoplasm. The enzyme catalyses CMP + ATP = CDP + ADP. The catalysed reaction is dCMP + ATP = dCDP + ADP. The sequence is that of Cytidylate kinase from Protochlamydia amoebophila (strain UWE25).